We begin with the raw amino-acid sequence, 182 residues long: Oligoribonuclease (182 aa).

Positions Leu-8 to Leu-171 constitute an Exonuclease domain. Tyr-129 is an active-site residue.

Belongs to the oligoribonuclease family.

It is found in the cytoplasm. Its function is as follows. 3'-to-5' exoribonuclease specific for small oligoribonucleotides. The polypeptide is Oligoribonuclease (Haemophilus influenzae (strain PittGG)).